A 352-amino-acid chain; its full sequence is Histidinol-phosphate aminotransferase (352 aa).

An N6-(pyridoxal phosphate)lysine modification is found at Lys216.

This sequence belongs to the class-II pyridoxal-phosphate-dependent aminotransferase family. Histidinol-phosphate aminotransferase subfamily. Pyridoxal 5'-phosphate serves as cofactor.

It catalyses the reaction L-histidinol phosphate + 2-oxoglutarate = 3-(imidazol-4-yl)-2-oxopropyl phosphate + L-glutamate. It functions in the pathway amino-acid biosynthesis; L-histidine biosynthesis; L-histidine from 5-phospho-alpha-D-ribose 1-diphosphate: step 7/9. The protein is Histidinol-phosphate aminotransferase of Methanoculleus marisnigri (strain ATCC 35101 / DSM 1498 / JR1).